The following is a 201-amino-acid chain: 3-isopropylmalate dehydratase small subunit (201 aa).

This sequence belongs to the LeuD family. LeuD type 1 subfamily. In terms of assembly, heterodimer of LeuC and LeuD.

It catalyses the reaction (2R,3S)-3-isopropylmalate = (2S)-2-isopropylmalate. The protein operates within amino-acid biosynthesis; L-leucine biosynthesis; L-leucine from 3-methyl-2-oxobutanoate: step 2/4. Catalyzes the isomerization between 2-isopropylmalate and 3-isopropylmalate, via the formation of 2-isopropylmaleate. This Paracoccus denitrificans (strain Pd 1222) protein is 3-isopropylmalate dehydratase small subunit.